The following is a 196-amino-acid chain: Large ribosomal subunit protein uL18 (196 aa).

The protein belongs to the universal ribosomal protein uL18 family. Part of the 50S ribosomal subunit. Contacts the 5S and 23S rRNAs.

In terms of biological role, this is one of the proteins that bind and probably mediate the attachment of the 5S RNA into the large ribosomal subunit, where it forms part of the central protuberance. This Saccharolobus islandicus (strain Y.N.15.51 / Yellowstone #2) (Sulfolobus islandicus) protein is Large ribosomal subunit protein uL18.